A 347-amino-acid chain; its full sequence is GTPase Obg (347 aa).

Positions 1–159 (MHFIDQAEIE…VRLRLELKLI (159 aa)) constitute an Obg domain. An OBG-type G domain is found at 160–328 (AEVGIVGLPN…LLQRVWQCLG (169 aa)). Residues 166–173 (GLPNAGKS), 191–195 (FTTLQ), 213–216 (DIPG), 280–283 (NKID), and 309–311 (SAI) each bind GTP. Residues S173 and T193 each contribute to the Mg(2+) site.

The protein belongs to the TRAFAC class OBG-HflX-like GTPase superfamily. OBG GTPase family. Monomer. The cofactor is Mg(2+).

Its subcellular location is the cytoplasm. In terms of biological role, an essential GTPase which binds GTP, GDP and possibly (p)ppGpp with moderate affinity, with high nucleotide exchange rates and a fairly low GTP hydrolysis rate. Plays a role in control of the cell cycle, stress response, ribosome biogenesis and in those bacteria that undergo differentiation, in morphogenesis control. The protein is GTPase Obg of Synechococcus sp. (strain JA-2-3B'a(2-13)) (Cyanobacteria bacterium Yellowstone B-Prime).